A 64-amino-acid polypeptide reads, in one-letter code: Translational regulator CsrA 1 (64 aa).

The protein belongs to the CsrA/RsmA family. Homodimer; the beta-strands of each monomer intercalate to form a hydrophobic core, while the alpha-helices form wings that extend away from the core.

It is found in the cytoplasm. Its function is as follows. A key translational regulator that binds mRNA to regulate translation initiation and/or mRNA stability. Mediates global changes in gene expression, shifting from rapid growth to stress survival by linking envelope stress, the stringent response and the catabolite repression systems. Usually binds in the 5'-UTR; binding at or near the Shine-Dalgarno sequence prevents ribosome-binding, repressing translation, binding elsewhere in the 5'-UTR can activate translation and/or stabilize the mRNA. Its function is antagonized by small RNA(s). This chain is Translational regulator CsrA 1, found in Pseudomonas syringae pv. tomato (strain ATCC BAA-871 / DC3000).